Here is a 235-residue protein sequence, read N- to C-terminus: MEKLEMLYEGKAKQIYATDKADEVVIYYKDDATAFNGEKKGQITDKGVMNNKITSILFEQLEKQGIKTHFIKKLNDREQLCKKVSIVPLEVIVRNVAAGSMAKRLGLEEGTKLKTTVFEFSYKDDELGDPLINSYHAVAIGAATFEEIDTILEMTAKINNILKEAFAKENINLIDFKIEFGKCADGTIVLADEISPDTCRFWDATTGEKLDKDRFRRDLGNVEDAYIEILKRISK.

Belongs to the SAICAR synthetase family.

It carries out the reaction 5-amino-1-(5-phospho-D-ribosyl)imidazole-4-carboxylate + L-aspartate + ATP = (2S)-2-[5-amino-1-(5-phospho-beta-D-ribosyl)imidazole-4-carboxamido]succinate + ADP + phosphate + 2 H(+). It participates in purine metabolism; IMP biosynthesis via de novo pathway; 5-amino-1-(5-phospho-D-ribosyl)imidazole-4-carboxamide from 5-amino-1-(5-phospho-D-ribosyl)imidazole-4-carboxylate: step 1/2. In Clostridium botulinum (strain Eklund 17B / Type B), this protein is Phosphoribosylaminoimidazole-succinocarboxamide synthase.